Reading from the N-terminus, the 156-residue chain is Ribosome maturation factor RimP (156 aa).

It belongs to the RimP family.

The protein localises to the cytoplasm. In terms of biological role, required for maturation of 30S ribosomal subunits. This chain is Ribosome maturation factor RimP, found in Microcystis aeruginosa (strain NIES-843 / IAM M-2473).